The primary structure comprises 149 residues: Protegrin-1 (149 aa).

A signal peptide spans 1–29; that stretch reads METQRASLCLGRWSLWLLLLALVVPSASA. Residues 30-130 constitute a propeptide that is removed on maturation; it reads QALSYREAVL…DITCNEVQGV (101 aa). The segment at 61-80 is disordered; the sequence is DQPPKADEDPGTPKPVSFTV. 4 disulfide bridges follow: C85-C96, C107-C124, C136-C145, and C138-C143. The residue at position 148 (R148) is an Arginine amide.

Belongs to the cathelicidin family.

The protein localises to the secreted. Microbicidal activity. Active against E.coli, Listeria monocytogenes and C.albicans, in vitro. The chain is Protegrin-1 (NPG1) from Sus scrofa (Pig).